Reading from the N-terminus, the 113-residue chain is Immunoglobulin lambda variable 2-23 (113 aa).

A signal peptide spans 1-19 (MAWALLLLTLLTQDTGSWA). Gln-20 carries the pyrrolidone carboxylic acid modification. The tract at residues 20-44 (QSALTQPASVSGSPGQSITISCTGT) is framework-1. An Ig-like domain is found at 20 to 113 (QSALTQPASV…EADYYCCSYA (94 aa)). Cysteines 41 and 109 form a disulfide. The tract at residues 45–53 (SSDVGSYNL) is complementarity-determining-1. The segment at 54 to 70 (VSWYQQHPGKAPKLMIY) is framework-2. The tract at residues 71–73 (EGS) is complementarity-determining-2. The tract at residues 73 to 92 (SKRPSGVSNRFSGSKSGNTA) is disordered. A framework-3 region spans residues 74-109 (KRPSGVSNRFSGSKSGNTASLTISGLQAEDEADYYC). Residues 78–92 (GVSNRFSGSKSGNTA) are compositionally biased toward polar residues. The interval 110–113 (CSYA) is complementarity-determining-3.

Immunoglobulins are composed of two identical heavy chains and two identical light chains; disulfide-linked.

Its subcellular location is the secreted. The protein resides in the cell membrane. Its function is as follows. V region of the variable domain of immunoglobulin light chains that participates in the antigen recognition. Immunoglobulins, also known as antibodies, are membrane-bound or secreted glycoproteins produced by B lymphocytes. In the recognition phase of humoral immunity, the membrane-bound immunoglobulins serve as receptors which, upon binding of a specific antigen, trigger the clonal expansion and differentiation of B lymphocytes into immunoglobulins-secreting plasma cells. Secreted immunoglobulins mediate the effector phase of humoral immunity, which results in the elimination of bound antigens. The antigen binding site is formed by the variable domain of one heavy chain, together with that of its associated light chain. Thus, each immunoglobulin has two antigen binding sites with remarkable affinity for a particular antigen. The variable domains are assembled by a process called V-(D)-J rearrangement and can then be subjected to somatic hypermutations which, after exposure to antigen and selection, allow affinity maturation for a particular antigen. In Homo sapiens (Human), this protein is Immunoglobulin lambda variable 2-23.